A 319-amino-acid polypeptide reads, in one-letter code: Methionyl-tRNA formyltransferase (319 aa).

113 to 116 (SLLP) is a binding site for (6S)-5,6,7,8-tetrahydrofolate.

Belongs to the Fmt family.

It catalyses the reaction L-methionyl-tRNA(fMet) + (6R)-10-formyltetrahydrofolate = N-formyl-L-methionyl-tRNA(fMet) + (6S)-5,6,7,8-tetrahydrofolate + H(+). Functionally, attaches a formyl group to the free amino group of methionyl-tRNA(fMet). The formyl group appears to play a dual role in the initiator identity of N-formylmethionyl-tRNA by promoting its recognition by IF2 and preventing the misappropriation of this tRNA by the elongation apparatus. The protein is Methionyl-tRNA formyltransferase of Pseudomonas fluorescens (strain ATCC BAA-477 / NRRL B-23932 / Pf-5).